The primary structure comprises 254 residues: Flavin-dependent thymidylate synthase (254 aa).

A ThyX domain is found at 7–237; it reads LRVQLIARTE…PAVFADFEIY (231 aa). FAD-binding positions include serine 71, 95–97, and glutamine 103; that span reads RHR. DUMP contacts are provided by residues 92–95, 103–107, and arginine 176; these read ELIR and QLSQR. A ThyX motif motif is present at residues 95–105; sequence RHRHFSYSQLS. Residues 192-194 and histidine 198 each bind FAD; that span reads NYR. Position 203 (arginine 203) interacts with dUMP. Arginine 203 (involved in ionization of N3 of dUMP, leading to its activation) is an active-site residue.

The protein belongs to the thymidylate synthase ThyX family. As to quaternary structure, homotetramer. FAD is required as a cofactor.

The enzyme catalyses dUMP + (6R)-5,10-methylene-5,6,7,8-tetrahydrofolate + NADPH + H(+) = dTMP + (6S)-5,6,7,8-tetrahydrofolate + NADP(+). Its pathway is pyrimidine metabolism; dTTP biosynthesis. Functionally, catalyzes the reductive methylation of 2'-deoxyuridine-5'-monophosphate (dUMP) to 2'-deoxythymidine-5'-monophosphate (dTMP) while utilizing 5,10-methylenetetrahydrofolate (mTHF) as the methyl donor, and NADPH and FADH(2) as the reductant. The sequence is that of Flavin-dependent thymidylate synthase from Mycobacterium sp. (strain JLS).